The primary structure comprises 391 residues: Protein CapJ (391 aa).

It functions in the pathway capsule biogenesis; capsule polysaccharide biosynthesis. In terms of biological role, required for the biosynthesis of type 1 capsular polysaccharide. This is Protein CapJ (capJ) from Staphylococcus aureus.